Here is a 57-residue protein sequence, read N- to C-terminus: uncharacterized protein (57 aa).

Positions 1-22 (MNEIIITIIVLILLLFITLSRN) are cleaved as a signal peptide. Positions 26-57 (NNQSNNGKKEKLIKCKKEVQQLRQKLDQLTFQ) form a coiled coil.

This is an uncharacterized protein from Acheta domesticus (House cricket).